The sequence spans 131 residues: Serum amyloid A-3 protein (131 aa).

The N-terminal stretch at 1–18 (MNLSTGIIFCFLILGVSS) is a signal peptide. Positions 94-105 (MTRDQVREDSKA) are enriched in basic and acidic residues. The tract at residues 94 to 131 (MTRDQVREDSKADQFANEWGRSGKDPNHFRPAGLPDKY) is disordered.

Belongs to the SAA family. In terms of tissue distribution, expressed in the liver. Expressed in mammary epithelial cells. Expressed at high levels in mammary ductal cells and vesicle engorged alveoli, but absent from stromal and connective tissue and leukocytes. Secreted into colostrum and mastitic milk (at protein level). Low expression levels, if any, in normal milk (at protein level).

Its subcellular location is the secreted. Functionally, major acute phase reactant. Apolipoprotein of the HDL complex. May have a role in protection of the mammary gland during remodeling and infection. In vitro exhibits antimicrobial activity against Escherichia coli, Streptococcus uberis and Pseudomonas aeruginosa. In Bos taurus (Bovine), this protein is Serum amyloid A-3 protein (SAA3).